Consider the following 72-residue polypeptide: Large ribosomal subunit protein bL31 (72 aa).

Zn(2+)-binding residues include cysteine 16, cysteine 18, cysteine 37, and cysteine 40.

This sequence belongs to the bacterial ribosomal protein bL31 family. Type A subfamily. As to quaternary structure, part of the 50S ribosomal subunit. Zn(2+) is required as a cofactor.

In terms of biological role, binds the 23S rRNA. The chain is Large ribosomal subunit protein bL31 from Buchnera aphidicola subsp. Schizaphis graminum (strain Sg).